The primary structure comprises 166 residues: Ureidoglycolate lyase (166 aa).

Belongs to the ureidoglycolate lyase family. Homodimer. It depends on Ni(2+) as a cofactor.

It catalyses the reaction (S)-ureidoglycolate = urea + glyoxylate. Its pathway is nitrogen metabolism; (S)-allantoin degradation. In terms of biological role, catalyzes the catabolism of the allantoin degradation intermediate (S)-ureidoglycolate, generating urea and glyoxylate. Involved in the utilization of allantoin as nitrogen source. In Rhizobium leguminosarum bv. trifolii (strain WSM2304), this protein is Ureidoglycolate lyase.